A 529-amino-acid polypeptide reads, in one-letter code: Bifunctional purine biosynthesis protein PurH (529 aa).

The 148-residue stretch at 1–148 folds into the MGS-like domain; sequence MQQRRPVRRA…KNHKDVAIVV (148 aa). An N6-acetyllysine modification is found at lysine 287.

Belongs to the PurH family.

The enzyme catalyses (6R)-10-formyltetrahydrofolate + 5-amino-1-(5-phospho-beta-D-ribosyl)imidazole-4-carboxamide = 5-formamido-1-(5-phospho-D-ribosyl)imidazole-4-carboxamide + (6S)-5,6,7,8-tetrahydrofolate. It catalyses the reaction IMP + H2O = 5-formamido-1-(5-phospho-D-ribosyl)imidazole-4-carboxamide. It functions in the pathway purine metabolism; IMP biosynthesis via de novo pathway; 5-formamido-1-(5-phospho-D-ribosyl)imidazole-4-carboxamide from 5-amino-1-(5-phospho-D-ribosyl)imidazole-4-carboxamide (10-formyl THF route): step 1/1. Its pathway is purine metabolism; IMP biosynthesis via de novo pathway; IMP from 5-formamido-1-(5-phospho-D-ribosyl)imidazole-4-carboxamide: step 1/1. This chain is Bifunctional purine biosynthesis protein PurH, found in Escherichia coli (strain 55989 / EAEC).